Here is a 343-residue protein sequence, read N- to C-terminus: Ornithine carbamoyltransferase (343 aa).

Residues 62–65 (STRT), Gln89, Arg113, and 140–143 (HPTQ) each bind carbamoyl phosphate. L-ornithine-binding positions include Asn172, Asp236, and 240–241 (SM). Carbamoyl phosphate is bound by residues 278-279 (CL) and Arg323.

Belongs to the aspartate/ornithine carbamoyltransferase superfamily. OTCase family.

The protein localises to the cytoplasm. It catalyses the reaction carbamoyl phosphate + L-ornithine = L-citrulline + phosphate + H(+). It participates in amino-acid degradation; L-arginine degradation via ADI pathway; carbamoyl phosphate from L-arginine: step 2/2. Functionally, reversibly catalyzes the transfer of the carbamoyl group from carbamoyl phosphate (CP) to the N(epsilon) atom of ornithine (ORN) to produce L-citrulline. This chain is Ornithine carbamoyltransferase, found in Levilactobacillus brevis (strain ATCC 367 / BCRC 12310 / CIP 105137 / JCM 1170 / LMG 11437 / NCIMB 947 / NCTC 947) (Lactobacillus brevis).